Here is a 170-residue protein sequence, read N- to C-terminus: NAD(P)H-quinone oxidoreductase subunit I, chloroplastic (170 aa).

2 4Fe-4S ferredoxin-type domains span residues 55-84 and 95-124; these read GRIH…VDWK and LNYS…MTEE. Residues C64, C67, C70, C74, C104, C107, C110, and C114 each coordinate [4Fe-4S] cluster.

The protein belongs to the complex I 23 kDa subunit family. As to quaternary structure, NDH is composed of at least 16 different subunits, 5 of which are encoded in the nucleus. [4Fe-4S] cluster is required as a cofactor.

The protein resides in the plastid. Its subcellular location is the chloroplast thylakoid membrane. The enzyme catalyses a plastoquinone + NADH + (n+1) H(+)(in) = a plastoquinol + NAD(+) + n H(+)(out). It catalyses the reaction a plastoquinone + NADPH + (n+1) H(+)(in) = a plastoquinol + NADP(+) + n H(+)(out). In terms of biological role, NDH shuttles electrons from NAD(P)H:plastoquinone, via FMN and iron-sulfur (Fe-S) centers, to quinones in the photosynthetic chain and possibly in a chloroplast respiratory chain. The immediate electron acceptor for the enzyme in this species is believed to be plastoquinone. Couples the redox reaction to proton translocation, and thus conserves the redox energy in a proton gradient. The polypeptide is NAD(P)H-quinone oxidoreductase subunit I, chloroplastic (Spinacia oleracea (Spinach)).